The following is a 310-amino-acid chain: S-adenosylmethionine-dependent nucleotide dehydratase (310 aa).

Residues 3 to 221 (PAIPPTINLH…VERHRKVESS (219 aa)) enclose the Radical SAM core domain. The [4Fe-4S] cluster site is built by Cys17, Cys21, and Cys24.

This sequence belongs to the radical SAM superfamily. Viperin family. Requires [4Fe-4S] cluster as cofactor.

It carries out the reaction GTP + AH2 + S-adenosyl-L-methionine = 3'-deoxy-3',4'-didehydro-GTP + 5'-deoxyadenosine + L-methionine + A + H2O + H(+). Its function is as follows. Expression of pVip15 in E.coli (strain MG1655) confers resistance to phage T7; prevents culture collapse upon infection. Catalyzes the conversion of guanosine triphosphate (GTP) to 3'-deoxy-3',4'-didehydro-GTP (ddhGTP), probably via a SAM-dependent radical mechanism. The modified nucleotide represses transcription from T7 RNA polymerase-directed genes (possibly by acting as chain terminators), strongly suggesting these nucleotides block viral polymerase transcription. This chain is S-adenosylmethionine-dependent nucleotide dehydratase, found in Coraliomargarita akajimensis (strain DSM 45221 / IAM 15411 / JCM 23193 / KCTC 12865 / 04OKA010-24).